Consider the following 233-residue polypeptide: Translation initiation factor 6 (233 aa).

The protein belongs to the eIF-6 family.

Functionally, binds to the 50S ribosomal subunit and prevents its association with the 30S ribosomal subunit to form the 70S initiation complex. The sequence is that of Translation initiation factor 6 from Aeropyrum pernix (strain ATCC 700893 / DSM 11879 / JCM 9820 / NBRC 100138 / K1).